The primary structure comprises 178 residues: Dual-action ribosomal maturation protein DarP (178 aa).

Belongs to the DarP family.

The protein localises to the cytoplasm. Its function is as follows. Member of a network of 50S ribosomal subunit biogenesis factors which assembles along the 30S-50S interface, preventing incorrect 23S rRNA structures from forming. Promotes peptidyl transferase center (PTC) maturation. The protein is Dual-action ribosomal maturation protein DarP of Mannheimia succiniciproducens (strain KCTC 0769BP / MBEL55E).